Consider the following 287-residue polypeptide: Large ribosomal subunit protein uL2 (287 aa).

Residues 221–287 are disordered; the sequence is RGSVMNPCDH…SKRSRGGRDS (67 aa). Positions 258–287 are enriched in basic residues; that stretch reads KTRKRNKPSNRFVLRKRRRTSKRSRGGRDS.

It belongs to the universal ribosomal protein uL2 family. As to quaternary structure, part of the 50S ribosomal subunit. Forms a bridge to the 30S subunit in the 70S ribosome.

Its function is as follows. One of the primary rRNA binding proteins. Required for association of the 30S and 50S subunits to form the 70S ribosome, for tRNA binding and peptide bond formation. It has been suggested to have peptidyltransferase activity; this is somewhat controversial. Makes several contacts with the 16S rRNA in the 70S ribosome. The protein is Large ribosomal subunit protein uL2 of Prochlorococcus marinus (strain MIT 9313).